The chain runs to 178 residues: Neuroblastoma suppressor of tumorigenicity 1 (178 aa).

The first 16 residues, M1 to A16, serve as a signal peptide directing secretion. Cystine bridges form between C34-C84, C48-C98, C58-C117, C62-C119, and C81-C122. One can recognise a CTCK domain in the interval C34–G123. A disordered region spans residues N132–D178. Residues S140–P160 are compositionally biased toward low complexity.

Belongs to the DAN family. In terms of assembly, homodimer.

It is found in the secreted. Its function is as follows. Possible candidate as a tumor suppressor gene of neuroblastoma. May play an important role in preventing cells from entering the final stage (G1/S) of the transformation process. This chain is Neuroblastoma suppressor of tumorigenicity 1 (Nbl1), found in Mus musculus (Mouse).